Reading from the N-terminus, the 445-residue chain is GTPase Der (445 aa).

EngA-type G domains lie at 3 to 167 (PVIA…YAGQ) and 180 to 353 (IKIA…AAAM). GTP contacts are provided by residues 9-16 (GRPNVGKS), 56-60 (DTGGF), 119-122 (NKAE), 186-193 (GRPNVGKS), 233-237 (DTAGL), and 298-301 (NKWD). The KH-like domain occupies 354-438 (SKLPTPKLTR…PLRIEFRSSN (85 aa)).

It belongs to the TRAFAC class TrmE-Era-EngA-EngB-Septin-like GTPase superfamily. EngA (Der) GTPase family. Associates with the 50S ribosomal subunit.

In terms of biological role, GTPase that plays an essential role in the late steps of ribosome biogenesis. This Burkholderia cenocepacia (strain ATCC BAA-245 / DSM 16553 / LMG 16656 / NCTC 13227 / J2315 / CF5610) (Burkholderia cepacia (strain J2315)) protein is GTPase Der.